The primary structure comprises 218 residues: Cytidylate kinase (218 aa).

21–29 (GPAASGKGT) contacts ATP.

This sequence belongs to the cytidylate kinase family. Type 1 subfamily.

The protein resides in the cytoplasm. The enzyme catalyses CMP + ATP = CDP + ADP. It carries out the reaction dCMP + ATP = dCDP + ADP. The sequence is that of Cytidylate kinase from Rickettsia canadensis (strain McKiel).